Here is a 350-residue protein sequence, read N- to C-terminus: NAD-dependent protein deacetylase sirtuin-2 (350 aa).

The Nuclear export signal motif lies at 4–14; the sequence is LRNLFTQTLGL. Ser16 bears the Phosphoserine mark. Residues 20 to 301 enclose the Deacetylase sirtuin-type domain; it reads RLLDELTLEG…LALADLLGWK (282 aa). NAD(+) is bound by residues 48–52 and 58–60; these read AGIST and DFR. Ser63 carries the phosphoserine modification. An NAD(+)-binding site is contributed by 130 to 133; sequence QNID. His150 acts as the Proton acceptor in catalysis. The Zn(2+) site is built by Cys158 and Cys163. At Ser170 the chain carries Phosphoserine. The Zn(2+) site is built by Cys184 and Cys187. Residues 225 to 226, 249 to 251, and Cys287 each bind NAD(+); these read TS and NKE. The disordered stretch occupies residues 312–350; sequence ANIDAQSGSQASNPSATVSPRKSPPPAKEAARTKEKEEH. The segment covering 315-331 has biased composition (polar residues); that stretch reads DAQSGSQASNPSATVSP. Residues Ser330 and Ser334 each carry the phosphoserine modification. The segment covering 340–350 has biased composition (basic and acidic residues); that stretch reads EAARTKEKEEH.

The protein belongs to the sirtuin family. Class I subfamily. In terms of assembly, interacts with CDC20, FOXO3 and FZR1. Associates with microtubules in primary cortical mature neurons. Homotrimer. Interacts (via both phosphorylated, unphosphorylated, active or inactive forms) with HDAC6; the interaction is necessary for the complex to interact with alpha-tubulin, suggesting that these proteins belong to a large complex that deacetylates the cytoskeleton. Interacts with FOXO1; the interaction is disrupted upon serum-starvation or oxidative stress, leading to increased level of acetylated FOXO1 and induction of autophagy. Interacts with RELA; the interaction occurs in the cytoplasm and is increased in a TNF-alpha-dependent manner. Interacts with HOXA10; the interaction is direct. Interacts with YWHAB and YWHAG; the interactions occur in a AKT-dependent manner and increase SIRT2-dependent TP53 deacetylation. Interacts with MAPK1/ERK2 and MAPK3/ERK1; the interactions increase SIRT2 stability and deacetylation activity. Interacts (phosphorylated form) with KMT5A isoform 2; the interaction is direct, stimulates KMT5A-mediated methyltransferase activity on histone at 'Lys-20' (H4K20me1) and is increased in a H(2)O(2)-induced oxidative stress-dependent manner. Interacts with G6PD; the interaction is enhanced by H(2)O(2) treatment. Interacts with a G1/S-specific cyclin E-CDK2 complex. Interacts with AURKA, CDK5R1 (p35 form) and CDK5 and HIF1A. Interacts with the tRNA ligase SARS1; recruited to the VEGFA promoter via interaction with SARS1. Interacts with BEX4; negatively regulates alpha-tubulin deacetylation by SIRT2. Zn(2+) is required as a cofactor. Post-translationally, phosphorylated at phosphoserine and phosphothreonine. Phosphorylated at Ser-330 by a mitotic kinase CDK1/cyclin B at the G2/M transition; phosphorylation regulates the delay in cell-cycle progression. Phosphorylated at Ser-330 by a mitotic kinase G1/S-specific cyclin E/Cdk2 complex; phosphorylation inactivates SIRT2-mediated alpha-tubulin deacetylation and thereby negatively regulates cell adhesion, cell migration and neurite outgrowth during neuronal differentiation. Phosphorylated by cyclin A/Cdk2 and p35-Cdk5 complexes and to a lesser extent by the cyclin D3/Cdk4 and cyclin B/Cdk1, in vitro. Dephosphorylated at Ser-330 by CDC14A and CDC14B around early anaphase. Acetylated by EP300; acetylation leads both to the decreased of SIRT2-mediated alpha-tubulin deacetylase activity and SIRT2-mediated down-regulation of TP53 transcriptional activity. In terms of processing, ubiquitinated. Expressed in the cerebellum, cerebral cortex and cervival spinal cord. Expressed in Purkinje cells, oligodendrocytes and Schwann cells (at protein level). Expressed in the central nervous system (CNS).

The protein localises to the nucleus. Its subcellular location is the cytoplasm. It is found in the perinuclear region. The protein resides in the cytoskeleton. It localises to the microtubule organizing center. The protein localises to the centrosome. Its subcellular location is the centriole. It is found in the spindle. The protein resides in the midbody. It localises to the chromosome. The protein localises to the perikaryon. Its subcellular location is the cell projection. It is found in the growth cone. The protein resides in the myelin membrane. It catalyses the reaction N(6)-acetyl-L-lysyl-[protein] + NAD(+) + H2O = 2''-O-acetyl-ADP-D-ribose + nicotinamide + L-lysyl-[protein]. The enzyme catalyses N(6)-tetradecanoyl-L-lysyl-[protein] + NAD(+) + H2O = 2''-O-tetradecanoyl-ADP-D-ribose + nicotinamide + L-lysyl-[protein]. The catalysed reaction is N(6)-hexadecanoyl-L-lysyl-[protein] + NAD(+) + H2O = 2''-O-hexadecanoyl-ADP-D-ribose + nicotinamide + L-lysyl-[protein]. Inhibited by Sirtinol, A3 and M15 small molecules. Inhibited by nicotinamide. Inhibited by a macrocyclic peptide inhibitor S2iL5. Inhibited by EP300-induced acetylation. NAD-dependent protein deacetylase, which deacetylates internal lysines on histone and alpha-tubulin as well as many other proteins such as key transcription factors. Participates in the modulation of multiple and diverse biological processes such as cell cycle control, genomic integrity, microtubule dynamics, cell differentiation, metabolic networks, and autophagy. Plays a major role in the control of cell cycle progression and genomic stability. Functions in the antephase checkpoint preventing precocious mitotic entry in response to microtubule stress agents, and hence allowing proper inheritance of chromosomes. Positively regulates the anaphase promoting complex/cyclosome (APC/C) ubiquitin ligase complex activity by deacetylating CDC20 and FZR1, then allowing progression through mitosis. Associates both with chromatin at transcriptional start sites (TSSs) and enhancers of active genes. Plays a role in cell cycle and chromatin compaction through epigenetic modulation of the regulation of histone H4 'Lys-20' methylation (H4K20me1) during early mitosis. Specifically deacetylates histone H4 at 'Lys-16' (H4K16ac) between the G2/M transition and metaphase enabling H4K20me1 deposition by KMT5A leading to ulterior levels of H4K20me2 and H4K20me3 deposition throughout cell cycle, and mitotic S-phase progression. Deacetylates KMT5A modulating KMT5A chromatin localization during the mitotic stress response. Also deacetylates histone H3 at 'Lys-57' (H3K56ac) during the mitotic G2/M transition. During oocyte meiosis progression, may deacetylate histone H4 at 'Lys-16' (H4K16ac) and alpha-tubulin, regulating spindle assembly and chromosome alignment by influencing microtubule dynamics and kinetochore function. Deacetylates histone H4 at 'Lys-16' (H4K16ac) at the VEGFA promoter and thereby contributes to regulate expression of VEGFA, a key regulator of angiogenesis. Deacetylates alpha-tubulin at 'Lys-40' and hence controls neuronal motility, oligodendroglial cell arbor projection processes and proliferation of non-neuronal cells. Phosphorylation at Ser-368 by a G1/S-specific cyclin E-CDK2 complex inactivates SIRT2-mediated alpha-tubulin deacetylation, negatively regulating cell adhesion, cell migration and neurite outgrowth during neuronal differentiation. Deacetylates PARD3 and participates in the regulation of Schwann cell peripheral myelination formation during early postnatal development and during postinjury remyelination. Involved in several cellular metabolic pathways. Plays a role in the regulation of blood glucose homeostasis by deacetylating and stabilizing phosphoenolpyruvate carboxykinase PCK1 activity in response to low nutrient availability. Acts as a key regulator in the pentose phosphate pathway (PPP) by deacetylating and activating the glucose-6-phosphate G6PD enzyme, and therefore, stimulates the production of cytosolic NADPH to counteract oxidative damage. Maintains energy homeostasis in response to nutrient deprivation as well as energy expenditure by inhibiting adipogenesis and promoting lipolysis. Attenuates adipocyte differentiation by deacetylating and promoting FOXO1 interaction to PPARG and subsequent repression of PPARG-dependent transcriptional activity. Plays a role in the regulation of lysosome-mediated degradation of protein aggregates by autophagy in neuronal cells. Deacetylates FOXO1 in response to oxidative stress or serum deprivation, thereby negatively regulating FOXO1-mediated autophagy. Deacetylates a broad range of transcription factors and co-regulators regulating target gene expression. Deacetylates transcriptional factor FOXO3 stimulating the ubiquitin ligase SCF(SKP2)-mediated FOXO3 ubiquitination and degradation. Deacetylates HIF1A and therefore promotes HIF1A degradation and inhibition of HIF1A transcriptional activity in tumor cells in response to hypoxia. Deacetylates RELA in the cytoplasm inhibiting NF-kappaB-dependent transcription activation upon TNF-alpha stimulation. Inhibits transcriptional activation by deacetylating p53/TP53 and EP300. Also deacetylates EIF5A. Functions as a negative regulator on oxidative stress-tolerance in response to anoxia-reoxygenation conditions. Plays a role as tumor suppressor. In addition to protein deacetylase activity, also has activity toward long-chain fatty acyl groups and mediates protein-lysine demyristoylation and depalmitoylation of target proteins, such as ARF6 and KRAS, thereby regulating their association with membranes. The polypeptide is NAD-dependent protein deacetylase sirtuin-2 (Sirt2) (Rattus norvegicus (Rat)).